The sequence spans 926 residues: MKKTRSTTLRRAWPSSDFSDRASDRMRSRSEKDYRLHKRFPAAFAPQASRGYMTSGDVSPISMSPISQSQFIPLGEILCLAISAMNSARKPVTQEALMEHLTTCFPGVPTPSQEILRHTLNTLVRERKIYPTPDGYFIVTPQTYFITPSLIRTNSKWYHLDERIPDRSQCTSPQPGTITPSASGCVRERTLPRNHCDSCHCCREDVHSTHAPTLQRKSAKDCKDPYCPPSLCQVPPTEKSKSTVNFSYKTETLSKPKDSEKQSKKFGLKLFRLSFKKDKTKQLANFSAQFPPEEWPLRDEDTPATIPREVEMEIIRRINPDLTVENVMRHTALMKKLEEEKAQRSKAGSSAHHSGRSKKSRTHRKSHGKSRSHSKTRVSKGDPSDGSHLDIPGGREYDFCDPLSRVPREGCFLIEHKGDNFIMHSNTNVLESHFPMTPEWDVSGELAKRRTEMPFPEPSRGSSHSKVHRSHSHTQDRRSRNERSNKAKERSRSMDNSKGPLGASSLGTPEDLAEGCSQDDQTPSQSYVDDSTLRPAQTVGHQRAHIASTSYKEVCIPEIVSGSKEPSSACSLLEPGKPPESLPSYGELNSCPTKTATDDYFQCNTSSETVLTAPSPLGKNKEDHDTLTLAEGVKKLSPSDRQVPHSSREPVGHKEESPKGPGGGPAASGGVAEGIANGRLVQHHGAEPSSLDKRKEIFSKDTLFKPLHSTLSVNSYHKSSLSLLKSHPKTPADTLPGRCEKLEPSLGTSAAQATPASQRQQESGGNQETSFDYYNVSDDDESEEGANKNTEEEKNREDVGTMQWLLEREKERDLQRKFEKNLTLLAPKETDSSSNQRATHSARLDSMDSSSITVDSGFNSPRTRESLASNTSSIVESNRRQNPALSPAHGGAGPAFNFRASADPPTNEAEKLQKPSNCLQASVTSV.

6 disordered regions span residues 1 to 32 (MKKT…RSEK), 338 to 394 (EEEK…IPGG), 452 to 529 (EMPF…SYVD), 632 to 693 (GVKK…SLDK), 724 to 803 (LKSH…GTMQ), and 825 to 926 (LAPK…VTSV). Residues 18 to 32 (FSDRASDRMRSRSEK) are compositionally biased toward basic and acidic residues. Residues 353-378 (HSGRSKKSRTHRKSHGKSRSHSKTRV) are compositionally biased toward basic residues. Residues 379 to 394 (SKGDPSDGSHLDIPGG) show a composition bias toward basic and acidic residues. Over residues 463–472 (SHSKVHRSHS) the composition is skewed to basic residues. Basic and acidic residues predominate over residues 473 to 495 (HTQDRRSRNERSNKAKERSRSMD). Residues 518–529 (QDDQTPSQSYVD) are compositionally biased toward polar residues. 2 stretches are compositionally biased toward basic and acidic residues: residues 632–658 (GVKK…EESP) and 684–693 (HGAEPSSLDK). The segment covering 746–772 (LGTSAAQATPASQRQQESGGNQETSFD) has biased composition (polar residues). A compositionally biased stretch (basic and acidic residues) spans 785-799 (GANKNTEEEKNREDV). Polar residues-rich tracts occupy residues 847–884 (MDSS…QNPA) and 914–926 (KPSN…VTSV).

This Macaca fascicularis (Crab-eating macaque) protein is Storkhead-box protein 2 (STOX2).